The chain runs to 149 residues: Putative oligosaccharyltransferase complex subunit CG9662 (149 aa).

Residues 1-32 are Cytoplasmic-facing; the sequence is MIETLYNLPFHILVPPNIKVRRFSIPMPSPMA. A helical membrane pass occupies residues 33 to 53; that stretch reads VFSVILFSYFLVTGGIIYDVI. The Extracellular segment spans residues 54-83; the sequence is VEPPSLGATVDEHGHSRPVAFMPYRVNGQY. Residues 84-104 form a helical membrane-spanning segment; sequence IMEGLASSFLFTVGGLGFIIM. Residues 105 to 117 are Cytoplasmic-facing; the sequence is DQTHTPGKTNLNR. Residues 118–138 traverse the membrane as a helical segment; that stretch reads LLLTAMGFIFILVSFFTTWLF. Residues 139-149 lie on the Extracellular side of the membrane; that stretch reads MRMKLPSYLQP.

This sequence belongs to the OSTC family. As to quaternary structure, component of the oligosaccharyltransferase (OST) complex.

The protein resides in the membrane. Functionally, subunit of the oligosaccharyl transferase (OST) complex that catalyzes the initial transfer of a defined glycan (Glc(3)Man(9)GlcNAc(2) in eukaryotes) from the lipid carrier dolichol-pyrophosphate to an asparagine residue within an Asn-X-Ser/Thr consensus motif in nascent polypeptide chains, the first step in protein N-glycosylation. N-glycosylation occurs cotranslationally and the complex associates with the Sec61 complex at the channel-forming translocon complex that mediates protein translocation across the endoplasmic reticulum (ER). All subunits are required for a maximal enzyme activity. This is Putative oligosaccharyltransferase complex subunit CG9662 from Drosophila melanogaster (Fruit fly).